A 237-amino-acid chain; its full sequence is Golgi anti-apoptotic protein (237 aa).

Over 1–37 the chain is Cytoplasmic; it reads MAMPSLSACSSIEDDFNYGSSVASASVHIRMAFLRKV. A helical transmembrane segment spans residues 38-58; sequence YGILCLQFLLTTATTAVFLYF. At 59 to 67 the chain is on the lumenal side; that stretch reads DCMRTFIQG. The chain crosses the membrane as a helical span at residues 68–88; sequence SPVLILASMFGSIGLIFALTL. Residues 89 to 94 lie on the Cytoplasmic side of the membrane; sequence HRHKHP. The helical transmembrane segment at 95-115 threads the bilayer; sequence LNLYLLCGFTLSESLTLASVV. Residue Thr116 is a topological domain, lumenal. A helical transmembrane segment spans residues 117–137; the sequence is FYDVHVVMQAFMLTTAAFLAL. The Cytoplasmic segment spans residues 138 to 151; it reads TTYTLQSKRDFSKL. A helical transmembrane segment spans residues 152-172; it reads GAGLFAALWILILSGLLGIFV. At 173 to 174 the chain is on the lumenal side; that stretch reads QN. A helical transmembrane segment spans residues 175–195; it reads ETVKLVLSAFGALVFCGFIIY. Over 196-209 the chain is Cytoplasmic; the sequence is DTHSLIHKLSPEEY. The helical intramembrane region spans 210 to 230; the sequence is VLASINLYLDIINLFLHLLQL. Residues 231 to 237 are Cytoplasmic-facing; it reads LEVSNKK.

The protein belongs to the BI1 family. LFG subfamily.

The protein localises to the host Golgi apparatus membrane. Functionally, may affect virulence through inhibition of apoptosis. The chain is Golgi anti-apoptotic protein (L6) from Vaccinia virus (strain LC16m0) (VACV).